A 196-amino-acid polypeptide reads, in one-letter code: V-type proton ATPase subunit E (196 aa).

The protein belongs to the V-ATPase E subunit family.

Its function is as follows. Produces ATP from ADP in the presence of a proton gradient across the membrane. The protein is V-type proton ATPase subunit E of Clostridium botulinum (strain Eklund 17B / Type B).